The primary structure comprises 472 residues: Ribosomal protein uS12 methylthiotransferase RimO (472 aa).

The 111-residue stretch at N33–P143 folds into the MTTase N-terminal domain. 6 residues coordinate [4Fe-4S] cluster: C42, C78, C107, C175, C179, and C182. Positions L161 to E398 constitute a Radical SAM core domain. One can recognise a TRAM domain in the interval A401–D467.

It belongs to the methylthiotransferase family. RimO subfamily. [4Fe-4S] cluster is required as a cofactor.

The protein localises to the cytoplasm. The enzyme catalyses L-aspartate(89)-[ribosomal protein uS12]-hydrogen + (sulfur carrier)-SH + AH2 + 2 S-adenosyl-L-methionine = 3-methylsulfanyl-L-aspartate(89)-[ribosomal protein uS12]-hydrogen + (sulfur carrier)-H + 5'-deoxyadenosine + L-methionine + A + S-adenosyl-L-homocysteine + 2 H(+). Functionally, catalyzes the methylthiolation of an aspartic acid residue of ribosomal protein uS12. This is Ribosomal protein uS12 methylthiotransferase RimO from Shewanella baltica (strain OS195).